The primary structure comprises 256 residues: Deoxyribose-phosphate aldolase (256 aa).

The active-site Proton donor/acceptor is the D102. Catalysis depends on K165, which acts as the Schiff-base intermediate with acetaldehyde. Catalysis depends on K197, which acts as the Proton donor/acceptor.

The protein belongs to the DeoC/FbaB aldolase family. DeoC type 2 subfamily.

It localises to the cytoplasm. It catalyses the reaction 2-deoxy-D-ribose 5-phosphate = D-glyceraldehyde 3-phosphate + acetaldehyde. It functions in the pathway carbohydrate degradation; 2-deoxy-D-ribose 1-phosphate degradation; D-glyceraldehyde 3-phosphate and acetaldehyde from 2-deoxy-alpha-D-ribose 1-phosphate: step 2/2. Catalyzes a reversible aldol reaction between acetaldehyde and D-glyceraldehyde 3-phosphate to generate 2-deoxy-D-ribose 5-phosphate. In Shewanella oneidensis (strain ATCC 700550 / JCM 31522 / CIP 106686 / LMG 19005 / NCIMB 14063 / MR-1), this protein is Deoxyribose-phosphate aldolase.